Consider the following 367-residue polypeptide: Riboflavin biosynthesis protein RibD (367 aa).

The 123-residue stretch at 1–123 folds into the CMP/dCMP-type deaminase domain; the sequence is MQDEYYMARA…RLQQAGIDVS (123 aa). The interval 1-145 is deaminase; sequence MQDEYYMARA…KGFLKRMRTG (145 aa). Zn(2+) is bound at residue His50. Glu52 acts as the Proton donor in catalysis. Residues Cys75 and Cys84 each contribute to the Zn(2+) site. Residues 146-367 are reductase; the sequence is FPYIQLKLGA…PDVCLHLVGA (222 aa). An NADP(+)-binding site is contributed by 161 to 164; it reads TAMA. Substrate is bound at residue Ser168. Trp170 provides a ligand contact to NADP(+). Position 184 (Arg184) interacts with substrate. Residues Thr196 and Asp200 each contribute to the NADP(+) site. Positions 204 and 207 each coordinate substrate. Ser234 contacts NADP(+). Substrate is bound at residue Glu299. 301-304 is a binding site for NADP(+); sequence GPTL.

The protein in the N-terminal section; belongs to the cytidine and deoxycytidylate deaminase family. In the C-terminal section; belongs to the HTP reductase family. In terms of assembly, homodimer. The cofactor is Zn(2+).

The enzyme catalyses 2,5-diamino-6-hydroxy-4-(5-phosphoribosylamino)-pyrimidine + H2O + H(+) = 5-amino-6-(5-phospho-D-ribosylamino)uracil + NH4(+). It carries out the reaction 5-amino-6-(5-phospho-D-ribitylamino)uracil + NADP(+) = 5-amino-6-(5-phospho-D-ribosylamino)uracil + NADPH + H(+). It functions in the pathway cofactor biosynthesis; riboflavin biosynthesis; 5-amino-6-(D-ribitylamino)uracil from GTP: step 2/4. It participates in cofactor biosynthesis; riboflavin biosynthesis; 5-amino-6-(D-ribitylamino)uracil from GTP: step 3/4. Converts 2,5-diamino-6-(ribosylamino)-4(3h)-pyrimidinone 5'-phosphate into 5-amino-6-(ribosylamino)-2,4(1h,3h)-pyrimidinedione 5'-phosphate. The sequence is that of Riboflavin biosynthesis protein RibD (ribD) from Escherichia coli (strain K12).